The following is a 329-amino-acid chain: DNA-directed RNA polymerase subunit alpha (329 aa).

The interval 1 to 234 is alpha N-terminal domain (alpha-NTD); that stretch reads MQGSVTEFLK…EQLDAFVELR (234 aa). The tract at residues 248 to 329 is alpha C-terminal domain (alpha-CTD); that stretch reads FDPILLRPVD…WPPASLADDL (82 aa).

It belongs to the RNA polymerase alpha chain family. As to quaternary structure, homodimer. The RNAP catalytic core consists of 2 alpha, 1 beta, 1 beta' and 1 omega subunit. When a sigma factor is associated with the core the holoenzyme is formed, which can initiate transcription.

The enzyme catalyses RNA(n) + a ribonucleoside 5'-triphosphate = RNA(n+1) + diphosphate. Its function is as follows. DNA-dependent RNA polymerase catalyzes the transcription of DNA into RNA using the four ribonucleoside triphosphates as substrates. In Shewanella loihica (strain ATCC BAA-1088 / PV-4), this protein is DNA-directed RNA polymerase subunit alpha.